A 479-amino-acid chain; its full sequence is Glutathione gamma-glutamylcysteinyltransferase 3 (479 aa).

The region spanning 1–221 is the Peptidase C83 domain; it reads MASAGLYRRV…GYMIISKLKR (221 aa). Active-site residues include C56, H162, and D180.

Belongs to the phytochelatin synthase family. As to expression, expressed in roots, nodules and leaves.

It catalyses the reaction [Glu(-Cys)](n)-Gly + glutathione + H(+) = [Glu(-Cys)](n+1)-Gly + glycine. Its activity is regulated as follows. Requires cadmium for activity. Functionally, involved in the synthesis of phytochelatins (PC) and homophytochelatins (hPC), the heavy-metal-binding peptides of plants. This is Glutathione gamma-glutamylcysteinyltransferase 3 (PCS3) from Lotus japonicus (Lotus corniculatus var. japonicus).